The following is a 356-amino-acid chain: Galactosylgalactosylxylosylprotein 3-beta-glucuronosyltransferase sqv-8 (356 aa).

At 1–9 the chain is on the cytoplasmic side; that stretch reads MFPSRLLEK. A helical; Signal-anchor for type II membrane protein membrane pass occupies residues 10-30; the sequence is WWLRAFIALVIFFVWQLFYAI. Residues 31 to 356 lie on the Lumenal side of the membrane; sequence NRVQSLEEER…LEAHALGVDN (326 aa). 2 N-linked (GlcNAc...) asparagine glycosylation sites follow: N93 and N173. Position 208 (D208) interacts with Mn(2+). N-linked (GlcNAc...) asparagine glycosylation is found at N246 and N272. E294 acts as the Proton acceptor in catalysis.

The protein belongs to the glycosyltransferase 43 family.

The protein resides in the membrane. The catalysed reaction is 3-O-(beta-D-galactosyl-(1-&gt;3)-beta-D-galactosyl-(1-&gt;4)-beta-D-xylosyl)-L-seryl-[protein] + UDP-alpha-D-glucuronate = 3-O-(beta-D-GlcA-(1-&gt;3)-beta-D-Gal-(1-&gt;3)-beta-D-Gal-(1-&gt;4)-beta-D-Xyl)-L-seryl-[protein] + UDP + H(+). Its function is as follows. Glycosyltransferase required for the biosynthesis of the tetrasaccharide (GlcA-Gal-Gal-Xyl-)Ser core linker of heparan sulfate and chondroitin sulfate. May be involved in the biosynthesis of the HNK-1 carbohydrate epitope on glycoproteins. Required for embryonic development. Involved in the elongation of the pharyngeal isthmus during the later stages of embryonic development. Involved in vulval epithelium invagination. The protein is Galactosylgalactosylxylosylprotein 3-beta-glucuronosyltransferase sqv-8 (sqv-8) of Caenorhabditis elegans.